A 475-amino-acid chain; its full sequence is ATP synthase subunit beta (475 aa).

Position 155–162 (155–162 (GGAGVGKT)) interacts with ATP.

It belongs to the ATPase alpha/beta chains family. As to quaternary structure, F-type ATPases have 2 components, CF(1) - the catalytic core - and CF(0) - the membrane proton channel. CF(1) has five subunits: alpha(3), beta(3), gamma(1), delta(1), epsilon(1). CF(0) has three main subunits: a(1), b(2) and c(9-12). The alpha and beta chains form an alternating ring which encloses part of the gamma chain. CF(1) is attached to CF(0) by a central stalk formed by the gamma and epsilon chains, while a peripheral stalk is formed by the delta and b chains.

It is found in the cell inner membrane. It catalyses the reaction ATP + H2O + 4 H(+)(in) = ADP + phosphate + 5 H(+)(out). Functionally, produces ATP from ADP in the presence of a proton gradient across the membrane. The catalytic sites are hosted primarily by the beta subunits. The sequence is that of ATP synthase subunit beta from Rhizobium etli (strain CIAT 652).